We begin with the raw amino-acid sequence, 225 residues long: Prolactin (225 aa).

Positions 1-28 are cleaved as a signal peptide; the sequence is MTIQGSDRKGTLLLLVMSNLLFCQNVHP. A disulfide bond links Cys32 and Cys37. A phosphoserine mark is found at Ser52 and Ser116. Cystine bridges form between Cys84–Cys200 and Cys217–Cys225.

It belongs to the somatotropin/prolactin family. In terms of assembly, interacts with PRLR.

The protein resides in the secreted. Functionally, prolactin acts primarily on the mammary gland by promoting lactation. The protein is Prolactin (PRL) of Alexandromys montebelli (Japanese grass vole).